A 25-amino-acid chain; its full sequence is GVVDILKGAAKDLAGHLASKVMNKI.

Ile25 carries the isoleucine amide modification.

In terms of tissue distribution, expressed by the skin glands.

It is found in the secreted. In terms of biological role, has hemolytic and antibacterial activity. The chain is Ocellatin-K1 from Leptodactylus knudseni (Knudsen's thin-toed frog).